We begin with the raw amino-acid sequence, 204 residues long: Holliday junction resolvase RecU (204 aa).

Residues threonine 89, aspartate 91, aspartate 104, and glutamine 123 each coordinate Mg(2+).

It belongs to the RecU family. It depends on Mg(2+) as a cofactor.

It is found in the cytoplasm. It carries out the reaction Endonucleolytic cleavage at a junction such as a reciprocal single-stranded crossover between two homologous DNA duplexes (Holliday junction).. In terms of biological role, endonuclease that resolves Holliday junction intermediates in genetic recombination. Cleaves mobile four-strand junctions by introducing symmetrical nicks in paired strands. Promotes annealing of linear ssDNA with homologous dsDNA. Required for DNA repair, homologous recombination and chromosome segregation. The polypeptide is Holliday junction resolvase RecU (Leuconostoc mesenteroides subsp. mesenteroides (strain ATCC 8293 / DSM 20343 / BCRC 11652 / CCM 1803 / JCM 6124 / NCDO 523 / NBRC 100496 / NCIMB 8023 / NCTC 12954 / NRRL B-1118 / 37Y)).